The primary structure comprises 478 residues: RNA-binding protein 42 (478 aa).

Residues 1–20 (MASAMAGAGPAPGLPVAGGP) are compositionally biased toward low complexity. The disordered stretch occupies residues 1-33 (MASAMAGAGPAPGLPVAGGPVVPGPGVGIPGKS). The residue at position 2 (Ala2) is an N-acetylalanine. Position 133 is a phosphoserine (Ser133). 4 positions are modified to asymmetric dimethylarginine: Arg151, Arg156, Arg166, and Arg179. Disordered regions lie at residues 171 to 207 (LSSA…MLPP) and 317 to 354 (SLRP…PEKL). Over residues 193–205 (PPLPGPPGPPMML) the composition is skewed to pro residues. Positions 234–478 (ELGLGLGLGL…QKEKKKLGLR (245 aa)) are necessary for interaction with HNRNPK. Positions 343–354 (GEDKKKGKPEKL) are enriched in basic and acidic residues. In terms of domain architecture, RRM spans 379–457 (FRIFCGDLGN…RPIKLRKSMW (79 aa)).

It belongs to the RRM RBM42 family. In terms of assembly, interacts with HNRNPK. In terms of tissue distribution, expressed in cell lines (at protein level). Expressed in heart, brain, spleen, lung, liver, skeletal muscle, kidney and testis.

The protein localises to the nucleus. It is found in the cytoplasm. Functionally, binds (via the RRM domain) to the 3'-untranslated region (UTR) of CDKN1A mRNA. This is RNA-binding protein 42 (Rbm42) from Mus musculus (Mouse).